We begin with the raw amino-acid sequence, 386 residues long: Succinate--CoA ligase [ADP-forming] subunit beta (386 aa).

The 236-residue stretch at 9–244 (KEILRSYGVS…LDEEDPKEVE (236 aa)) folds into the ATP-grasp domain. Residues Lys-46, 53–55 (GRG), Glu-99, Cys-102, and Glu-107 each bind ATP. Mg(2+) is bound by residues Asn-199 and Asp-213. Substrate-binding positions include Asn-264 and 321–323 (GIM).

The protein belongs to the succinate/malate CoA ligase beta subunit family. Heterotetramer of two alpha and two beta subunits. The cofactor is Mg(2+).

The enzyme catalyses succinate + ATP + CoA = succinyl-CoA + ADP + phosphate. It catalyses the reaction GTP + succinate + CoA = succinyl-CoA + GDP + phosphate. The protein operates within carbohydrate metabolism; tricarboxylic acid cycle; succinate from succinyl-CoA (ligase route): step 1/1. Its function is as follows. Succinyl-CoA synthetase functions in the citric acid cycle (TCA), coupling the hydrolysis of succinyl-CoA to the synthesis of either ATP or GTP and thus represents the only step of substrate-level phosphorylation in the TCA. The beta subunit provides nucleotide specificity of the enzyme and binds the substrate succinate, while the binding sites for coenzyme A and phosphate are found in the alpha subunit. The protein is Succinate--CoA ligase [ADP-forming] subunit beta of Geobacillus thermodenitrificans (strain NG80-2).